The primary structure comprises 175 residues: T-cell surface glycoprotein CD3 epsilon chain (175 aa).

A signal peptide spans 1–21 (MRCEVPLPLLGLLLCVVGAAA). The Extracellular segment spans residues 22-100 (QGGQEEFAVE…VCANCEELDT (79 aa)). The chain crosses the membrane as a helical span at residues 101–121 (FTVVGIIAADLLITLGVLILV). The Cytoplasmic segment spans residues 122–175 (YYFSKNKKGQSRAAAGSRPRAQKMRRPPPVPNPDYEPIRKGQRDVYAGLEHRGF). Residues 133-163 (RAAAGSRPRAQKMRRPPPVPNPDYEPIRKGQ) are disordered. The region spanning 146-173 (RRPPPVPNPDYEPIRKGQRDVYAGLEHR) is the ITAM domain.

In terms of assembly, the TCR/CD3 complex of T-lymphocytes consists of either a TCR alpha/beta or TCR gamma/delta heterodimer coexpressed at the cell surface with the invariant subunits of CD3 labeled gamma, delta, epsilon, zeta, and eta.

It is found in the cell membrane. Its function is as follows. The CD3 complex mediates signal transduction, resulting in T-cell activation and proliferation. Required for normal immune responses. This chain is T-cell surface glycoprotein CD3 epsilon chain (CD3E), found in Gallus gallus (Chicken).